The chain runs to 305 residues: Acetylglutamate kinase (305 aa).

Substrate contacts are provided by residues 67-68 (GG), Arg-89, and Asn-190.

It belongs to the acetylglutamate kinase family. ArgB subfamily.

Its subcellular location is the cytoplasm. It carries out the reaction N-acetyl-L-glutamate + ATP = N-acetyl-L-glutamyl 5-phosphate + ADP. The protein operates within amino-acid biosynthesis; L-arginine biosynthesis; N(2)-acetyl-L-ornithine from L-glutamate: step 2/4. Catalyzes the ATP-dependent phosphorylation of N-acetyl-L-glutamate. The polypeptide is Acetylglutamate kinase (Bifidobacterium animalis subsp. lactis (strain AD011)).